We begin with the raw amino-acid sequence, 553 residues long: Cytokine-like nuclear factor N-PAC (553 aa).

A PWWP domain is found at Leu-8 to His-66. Composition is skewed to basic and acidic residues over residues Arg-92–Lys-145 and Arg-162–Thr-182. The tract at residues Arg-92 to Thr-188 is disordered. At Ser-130 the chain carries Phosphoserine. Lys-135 is covalently cross-linked (Glycyl lysine isopeptide (Lys-Gly) (interchain with G-Cter in SUMO2)). Ser-167 is modified (phosphoserine). The segment at residues Pro-168–Asp-180 is a DNA-binding region (a.T hook). Glycyl lysine isopeptide (Lys-Gly) (interchain with G-Cter in SUMO2) cross-links involve residues Lys-176, Lys-179, Lys-201, and Lys-211. Residues Asp-214–Phe-217 are interaction with histone H3. Residues His-216–Thr-225 are interaction with KDM1B. Residues Lys-227, Lys-237, Lys-240, and Lys-269 each participate in a glycyl lysine isopeptide (Lys-Gly) (interchain with G-Cter in SUMO2) cross-link. The dehydrogenase domain stretch occupies residues Gly-261 to His-553. Residue Gly-271–Asn-285 coordinates NAD(+). A Glycyl lysine isopeptide (Lys-Gly) (interchain with G-Cter in SUMO2) cross-link involves residue Lys-302. Residues Thr-362 and Lys-505 each contribute to the NAD(+) site. Ser-540 carries the post-translational modification Phosphoserine.

Belongs to the HIBADH-related family. NP60 subfamily. As to quaternary structure, homotetramere. Interacts with MAPK14. Interacts with KDM1B at nucleosomes; this interaction stimulates H3K4me1 and H3K4me2 demethylation. Binds to mononucleosomes. Interacts with GATA4; the interaction is required for a synergistic activation of GATA4 target genes transcription.

The protein resides in the nucleus. The protein localises to the chromosome. In terms of biological role, cytokine-like nuclear factor with chromatin gene reader activity involved in chromatin modification and regulation of gene expression. Acts as a nucleosome-destabilizing factor that is recruited to genes during transcriptional activation. Recognizes and binds histone H3 without a preference for specific epigenetic markers and also binds DNA. Interacts with KDM1B and promotes its histone demethylase activity by facilitating the capture of H3 tails, they form a multifunctional enzyme complex that modifies transcribed chromatin and facilitates Pol II transcription through nucleosomes. Stimulates the acetylation of 'Lys-56' of nucleosomal histone H3 (H3K56ac) by EP300. With GATA4, co-binds a defined set of heart development genes and coregulates their expression during cardiomyocyte differentiation. Regulates p38 MAP kinase activity by mediating stress activation of MAPK14/p38alpha and specifically regulating MAPK14 signaling. Indirectly promotes phosphorylation of MAPK14 and activation of ATF2. The phosphorylation of MAPK14 requires upstream activity of MAP2K4 and MAP2K6. This chain is Cytokine-like nuclear factor N-PAC, found in Homo sapiens (Human).